The following is a 144-amino-acid chain: Large ribosomal subunit protein uL15 (144 aa).

Residues 1–54 are disordered; it reads MKLNTIKPAEGAKHARRRVGRGIGSGLGKTGGRGHKGQKSRAGGFHKVGFEGGQ. Positions 21 to 31 are enriched in gly residues; that stretch reads RGIGSGLGKTG.

It belongs to the universal ribosomal protein uL15 family. In terms of assembly, part of the 50S ribosomal subunit.

Binds to the 23S rRNA. The protein is Large ribosomal subunit protein uL15 of Methylobacillus flagellatus (strain ATCC 51484 / DSM 6875 / VKM B-1610 / KT).